Here is a 497-residue protein sequence, read N- to C-terminus: Solute carrier family 2, facilitated glucose transporter member 6 (497 aa).

At 1-36 (MQEPLLRTEGLDYDTFPEVPATPGERERAGALKNRR) the chain is on the cytoplasmic side. Residues 5 to 6 (LL) carry the Dileucine internalization motif motif. The helical transmembrane segment at 37 to 57 (VFLATFAAVLGNFSFGYALVY) threads the bilayer. Residues 58–80 (TSPVIPELKLSSDPALHLDKIQA) are Extracellular-facing. Residues 81–101 (SWFGSVFTLGAAAGGLSAMLL) traverse the membrane as a helical segment. Residues 102–115 (NDLLGRKLSIMFSA) lie on the Cytoplasmic side of the membrane. A helical membrane pass occupies residues 116–136 (VPSAIGYAIMAGARGLWMLLL). Over 137-138 (GR) the chain is Extracellular. Residues 139-159 (MLTGFAGGLTAACIPVYVSEI) form a helical membrane-spanning segment. At 160 to 171 (APPDVRGALGAT) the chain is on the cytoplasmic side. Residues 172–192 (PQLMAVFGSLSLYALGLLLPW) traverse the membrane as a helical segment. Q173 lines the a D-hexose pocket. A topological domain (extracellular) is located at residue R193. Residues 194–214 (WLAVAGEGPVLIMILLLSFMP) form a helical membrane-spanning segment. At 215–273 (NSPRFLLSKSRDEEALQALTWLRADSEVHWEFEQIQDNVRRQSSRVSWAEAREPRVYRP) the chain is on the cytoplasmic side. Residues 274–294 (VLIAVLMRFLQQLTGITPILV) traverse the membrane as a helical segment. 284 to 285 (QQ) is an a D-hexose binding site. Residues 295 to 312 (YLQTIFDNTSVVLPSQQD) are Extracellular-facing. N302 carries an N-linked (GlcNAc...) asparagine glycan. A helical transmembrane segment spans residues 313–333 (AAIVGAVRLLSVLIAAVTMDL). Residues 334–337 (AGRK) are Cytoplasmic-facing. The chain crosses the membrane as a helical span at residues 338–358 (VLLYVSASVMFAANLTLGLYV). The Extracellular segment spans residues 359-385 (QFVPRPLTPNSTVEIVTLGDTAFNYLT). An N-linked (GlcNAc...) asparagine glycan is attached at N368. The helical transmembrane segment at 386 to 406 (LIPLLATMLFIMGYAMGWGPI) threads the bilayer. The Cytoplasmic segment spans residues 407-425 (TWLLMSEVLPLRARGVASG). W408 is an a D-hexose binding site. A helical membrane pass occupies residues 426–446 (LCVLVSWLTAFVLTNYFLLAV). A topological domain (extracellular) is located at residue N447. Residues 448–468 (AFGLQVPFFFFSAICLLSLLF) form a helical membrane-spanning segment. Over 469 to 497 (TGCCVPETRGRSLEQIEAFFHTRRMSFRP) the chain is Cytoplasmic.

Belongs to the major facilitator superfamily. Sugar transporter (TC 2.A.1.1) family. In terms of tissue distribution, mainly expressed in brain and spleen. Also expressed in lung, heart, muscle, liver, kidney, fat, whole blood, testes, ovaries and uterus.

The protein resides in the lysosome membrane. Functionally, probable sugar transporter that acts as a regulator of glycolysis in macrophages. Does not transport glucose. This chain is Solute carrier family 2, facilitated glucose transporter member 6, found in Mus musculus (Mouse).